Reading from the N-terminus, the 265-residue chain is uncharacterized protein (265 aa).

Positions 233–265 (STACGSDQRPTRLPRASCSSRSISGSAARPWKR) are disordered. Over residues 247–265 (RASCSSRSISGSAARPWKR) the composition is skewed to low complexity.

This is an uncharacterized protein from Escherichia coli.